The following is a 285-amino-acid chain: MSIHGILGEQTTDYPTEYSPETLYPIARSMGRDVIGWQNDKLEVGVDWWQAFELSWLNQQGISQVAIARFGIPANSPFIVESKSLKLYLNSINFTEFGSWAEVQKLIAEDLSKCVQAEVQVELFHLADRHSGLLIAQPDGICIDDALVNSTEKVALMLHPDASLLERDSSDAQISDGKTFSFYSNLLRSNCPVTNQPDWAALAVSITSKKVVNQANMLRYILSFRQHNGFHEQCVEQIFADLSQYYEPSKLMVRAWYTRRGGIDINPCRVSDIALLPVPSRLIRQ.

80–82 (VES) contacts substrate. Position 82–83 (82–83 (SK)) interacts with NADPH. Catalysis depends on Cys-191, which acts as the Thioimide intermediate. Asp-198 (proton donor) is an active-site residue. Residue 231 to 232 (HE) participates in substrate binding. Position 260 to 261 (260 to 261 (RG)) interacts with NADPH.

The protein belongs to the GTP cyclohydrolase I family. QueF type 2 subfamily. In terms of assembly, homodimer.

The protein resides in the cytoplasm. The enzyme catalyses 7-aminomethyl-7-carbaguanine + 2 NADP(+) = 7-cyano-7-deazaguanine + 2 NADPH + 3 H(+). Its pathway is tRNA modification; tRNA-queuosine biosynthesis. Catalyzes the NADPH-dependent reduction of 7-cyano-7-deazaguanine (preQ0) to 7-aminomethyl-7-deazaguanine (preQ1). The chain is NADPH-dependent 7-cyano-7-deazaguanine reductase from Psychrobacter arcticus (strain DSM 17307 / VKM B-2377 / 273-4).